The following is a 585-amino-acid chain: Arginine--tRNA ligase (585 aa).

The 'HIGH' region motif lies at P127–H137.

The protein belongs to the class-I aminoacyl-tRNA synthetase family. As to quaternary structure, monomer.

Its subcellular location is the cytoplasm. The catalysed reaction is tRNA(Arg) + L-arginine + ATP = L-arginyl-tRNA(Arg) + AMP + diphosphate. The protein is Arginine--tRNA ligase of Borreliella afzelii (strain PKo) (Borrelia afzelii).